Consider the following 116-residue polypeptide: Ribosome-binding factor A (116 aa).

Belongs to the RbfA family. As to quaternary structure, monomer. Binds 30S ribosomal subunits, but not 50S ribosomal subunits or 70S ribosomes.

It is found in the cytoplasm. Its function is as follows. One of several proteins that assist in the late maturation steps of the functional core of the 30S ribosomal subunit. Associates with free 30S ribosomal subunits (but not with 30S subunits that are part of 70S ribosomes or polysomes). Required for efficient processing of 16S rRNA. May interact with the 5'-terminal helix region of 16S rRNA. The chain is Ribosome-binding factor A from Buchnera aphidicola subsp. Cinara cedri (strain Cc).